The following is a 233-amino-acid chain: Probable GTP-binding protein EngB (233 aa).

The region spanning 21–228 is the EngB-type G domain; it reads GLPEVALVGR…WRWIREHVQD (208 aa). GTP contacts are provided by residues 29–36 and 56–60; these read GRSNVGKS and GRTQA. Residues S36 and T58 each coordinate Mg(2+). The tract at residues 68–87 is disordered; it reads PQGKPRPEGEPQPDKDAGRT. Residues 72–85 are compositionally biased toward basic and acidic residues; it reads PRPEGEPQPDKDAG. Residues 107 to 110, 174 to 177, and 207 to 209 each bind GTP; these read DMPG, TKAD, and FSA.

Belongs to the TRAFAC class TrmE-Era-EngA-EngB-Septin-like GTPase superfamily. EngB GTPase family. Mg(2+) is required as a cofactor.

Necessary for normal cell division and for the maintenance of normal septation. The chain is Probable GTP-binding protein EngB from Symbiobacterium thermophilum (strain DSM 24528 / JCM 14929 / IAM 14863 / T).